The primary structure comprises 693 residues: Elongation factor G (693 aa).

Residues 8 to 282 form the tr-type G domain; sequence EHTRNIGIMA…AVIDFMPSPT (275 aa). Residues 17 to 24, 81 to 85, and 135 to 138 contribute to the GTP site; these read AHIDAGKT, DTPGH, and NKMD.

The protein belongs to the TRAFAC class translation factor GTPase superfamily. Classic translation factor GTPase family. EF-G/EF-2 subfamily.

It localises to the cytoplasm. Functionally, catalyzes the GTP-dependent ribosomal translocation step during translation elongation. During this step, the ribosome changes from the pre-translocational (PRE) to the post-translocational (POST) state as the newly formed A-site-bound peptidyl-tRNA and P-site-bound deacylated tRNA move to the P and E sites, respectively. Catalyzes the coordinated movement of the two tRNA molecules, the mRNA and conformational changes in the ribosome. The chain is Elongation factor G from Ruminiclostridium cellulolyticum (strain ATCC 35319 / DSM 5812 / JCM 6584 / H10) (Clostridium cellulolyticum).